Here is a 113-residue protein sequence, read N- to C-terminus: Small ribosomal subunit protein mS41 (113 aa).

Residues 1 to 22 (MLILKRIFIIRNFIFPFSNCRY) constitute a mitochondrion transit peptide.

It belongs to the mitochondrion-specific ribosomal protein mS41 family. As to quaternary structure, component of the mitochondrial small ribosomal subunit (mt-SSU). Mature yeast 74S mitochondrial ribosomes consist of a small (37S) and a large (54S) subunit. The 37S small subunit contains a 15S ribosomal RNA (15S mt-rRNA) and at least 32 different proteins. The 54S large subunit contains a 21S rRNA (21S mt-rRNA) and at least 45 different proteins.

The protein localises to the mitochondrion. Component of the mitochondrial ribosome (mitoribosome), a dedicated translation machinery responsible for the synthesis of mitochondrial genome-encoded proteins, including at least some of the essential transmembrane subunits of the mitochondrial respiratory chain. The mitoribosomes are attached to the mitochondrial inner membrane and translation products are cotranslationally integrated into the membrane. mS41 is involved in telomere length regulation. The protein is Small ribosomal subunit protein mS41 (fyv4) of Schizosaccharomyces pombe (strain 972 / ATCC 24843) (Fission yeast).